The following is a 243-amino-acid chain: MAELLLGVNIDHIATLRNARGTPYPDPVQAAFVAEQAGADGITVHLREDRRHITDRDVRILRETLQTRMNLEMAVTEEMLNIACEVKPHFCCLVPEKRQEVTTEGGLDVAGQQEKIDNAVARLSQANILVSLFIDADKRQIDAAVASGAAYIEIHTGAYADAPDDETRQHEFERIRDAATYAAAKGLKVNAGHGLTYHNVLPIAALPEMHELNIGHAIIGRAVISGLKDAVAEMKSLMREARR.

Asparagine 9 is a 3-amino-2-oxopropyl phosphate binding site. 1-deoxy-D-xylulose 5-phosphate is bound at residue 11-12; sequence DH. Arginine 20 is a 3-amino-2-oxopropyl phosphate binding site. The active-site Proton acceptor is the histidine 45. Positions 47 and 52 each coordinate 1-deoxy-D-xylulose 5-phosphate. Glutamate 72 functions as the Proton acceptor in the catalytic mechanism. Threonine 102 is a 1-deoxy-D-xylulose 5-phosphate binding site. Histidine 193 (proton donor) is an active-site residue. Residues glycine 194 and 215-216 contribute to the 3-amino-2-oxopropyl phosphate site; that span reads GH.

The protein belongs to the PNP synthase family. In terms of assembly, homooctamer; tetramer of dimers.

It is found in the cytoplasm. It catalyses the reaction 3-amino-2-oxopropyl phosphate + 1-deoxy-D-xylulose 5-phosphate = pyridoxine 5'-phosphate + phosphate + 2 H2O + H(+). It participates in cofactor biosynthesis; pyridoxine 5'-phosphate biosynthesis; pyridoxine 5'-phosphate from D-erythrose 4-phosphate: step 5/5. Functionally, catalyzes the complicated ring closure reaction between the two acyclic compounds 1-deoxy-D-xylulose-5-phosphate (DXP) and 3-amino-2-oxopropyl phosphate (1-amino-acetone-3-phosphate or AAP) to form pyridoxine 5'-phosphate (PNP) and inorganic phosphate. The chain is Pyridoxine 5'-phosphate synthase from Pectobacterium atrosepticum (strain SCRI 1043 / ATCC BAA-672) (Erwinia carotovora subsp. atroseptica).